The chain runs to 131 residues: Protein anoxia up-regulated (131 aa).

A compositionally biased stretch (polar residues) spans M1–V24. The tract at residues M1–G121 is disordered. Composition is skewed to low complexity over residues S44–S53 and T98–G116.

In terms of tissue distribution, concentrated in lamina neurons, first optic lobe neurons and cortical neurons of central brain.

In terms of biological role, plays an important role in the regulation of tissue responsiveness to oxygen deprivation. The protein is Protein anoxia up-regulated of Drosophila melanogaster (Fruit fly).